Reading from the N-terminus, the 294-residue chain is Homoserine kinase (294 aa).

84–94 contacts ATP; it reads PFSRGLGSSSA.

Belongs to the GHMP kinase family. Homoserine kinase subfamily.

The protein localises to the cytoplasm. It carries out the reaction L-homoserine + ATP = O-phospho-L-homoserine + ADP + H(+). It functions in the pathway amino-acid biosynthesis; L-threonine biosynthesis; L-threonine from L-aspartate: step 4/5. Catalyzes the ATP-dependent phosphorylation of L-homoserine to L-homoserine phosphate. In Campylobacter concisus (strain 13826), this protein is Homoserine kinase.